Reading from the N-terminus, the 438-residue chain is tRNA modification GTPase MnmE (438 aa).

(6S)-5-formyl-5,6,7,8-tetrahydrofolate is bound by residues arginine 19, glutamate 76, and lysine 115. One can recognise a TrmE-type G domain in the interval 211–363 (GYKVAIIGRP…LSKELESYLN (153 aa)). Residues 221–226 (NVGKSS), 240–246 (SETAGTT), and 265–268 (DTAG) contribute to the GTP site. Mg(2+)-binding residues include serine 225 and threonine 246. Lysine 438 serves as a coordination point for (6S)-5-formyl-5,6,7,8-tetrahydrofolate.

The protein belongs to the TRAFAC class TrmE-Era-EngA-EngB-Septin-like GTPase superfamily. TrmE GTPase family. In terms of assembly, homodimer. Heterotetramer of two MnmE and two MnmG subunits. The cofactor is K(+).

The protein resides in the cytoplasm. Exhibits a very high intrinsic GTPase hydrolysis rate. Involved in the addition of a carboxymethylaminomethyl (cmnm) group at the wobble position (U34) of certain tRNAs, forming tRNA-cmnm(5)s(2)U34. The chain is tRNA modification GTPase MnmE from Campylobacter fetus subsp. fetus (strain 82-40).